The following is a 227-amino-acid chain: N-acetyltransferase family 8 member 7 (227 aa).

The next 2 membrane-spanning stretches (helical) occupy residues 36–56 (MLLLPRTLLLLLGVPLTLFLA) and 58–78 (GSWLLVLLSILTLFLSLWFLA). In terms of domain architecture, N-acetyltransferase spans 61-220 (LLVLLSILTL…PMINLKYSLT (160 aa)).

The protein belongs to the camello family.

The protein resides in the membrane. It catalyses the reaction L-lysyl-[protein] + acetyl-CoA = N(6)-acetyl-L-lysyl-[protein] + CoA + H(+). In terms of biological role, has histone acetyltransferase activity in vitro, with specificity for histone H4. This Mus musculus (Mouse) protein is N-acetyltransferase family 8 member 7.